The following is a 201-amino-acid chain: Ras-related protein Rab-1B (201 aa).

Met-1 carries the post-translational modification N-acetylmethionine. Residues Ser-17, Gly-18, Val-19, Gly-20, Lys-21, Ser-22, Cys-23, Tyr-33, Thr-34, Glu-35, Ser-36, Ser-39, and Thr-40 each contribute to the GTP site. Ser-22 contributes to the Mg(2+) binding site. A Switch 1 motif is present at residues 30-45 (DDTYTESYISTIGVDF). Mg(2+)-binding residues include Thr-40 and Asp-63. A switch 2 region; Required for interaction with REP1/CHM region spans residues 64–83 (TAGQERFRTITSSYYRGAHG). The Switch 2 motif lies at 65–80 (AGQERFRTITSSYYRG). Residues Gly-66, Asn-121, Lys-122, Asp-124, Ser-151, Ala-152, and Lys-153 each contribute to the GTP site. The disordered stretch occupies residues 173–201 (MGPGAASGGERPNLKIDSTPVKQAGGGCC). 2 S-geranylgeranyl cysteine lipidation sites follow: Cys-200 and Cys-201. The residue at position 201 (Cys-201) is a Cysteine methyl ester.

Belongs to the small GTPase superfamily. Rab family. In terms of assembly, interacts with MICAL1 and MICAL2. Interacts (in GTP-bound form) with MICALCL, MICAL1 and MILCAL3. Interacts with GDI1; the interaction requires the GDP-bound state. Interacts with CHM/REP1; the interaction requires the GDP-bound form and is necessary for prenylation by GGTase II. Interacts with RabGAP TBC1D20. Interacts (in GDP-bound form) with lipid phosphatase MTMR6 (via GRAM domain); the interaction regulates MTMR6 recruitment to the endoplasmic reticulum-Golgi intermediate compartment. Interacts (in GDP-bound form) with lipid phosphatase MTMR7. Mg(2+) is required as a cofactor. Post-translationally, prenylated; by GGTase II, only after interaction of the substrate with Rab escort protein 1 (REP1).

The protein localises to the cytoplasm. It is found in the membrane. It localises to the preautophagosomal structure membrane. The protein resides in the perinuclear region. It catalyses the reaction GTP + H2O = GDP + phosphate + H(+). With respect to regulation, regulated by guanine nucleotide exchange factors (GEFs) which promote the exchange of bound GDP for free GTP. Regulated by GTPase activating proteins (GAPs) including TBC1D20 which increases the GTP hydrolysis activity. Inhibited by GDP dissociation inhibitors (GDIs). Functionally, the small GTPases Rab are key regulators of intracellular membrane trafficking, from the formation of transport vesicles to their fusion with membranes. Rabs cycle between an inactive GDP-bound form and an active GTP-bound form that is able to recruit to membranes different set of downstream effectors directly responsible for vesicle formation, movement, tethering and fusion. Plays a role in the initial events of the autophagic vacuole development which take place at specialized regions of the endoplasmic reticulum. Regulates vesicular transport between the endoplasmic reticulum and successive Golgi compartments. Required to modulate the compacted morphology of the Golgi. Promotes the recruitment of lipid phosphatase MTMR6 to the endoplasmic reticulum-Golgi intermediate compartment. The protein is Ras-related protein Rab-1B (RAB1B) of Bos taurus (Bovine).